The primary structure comprises 759 residues: NADP-dependent malic enzyme (759 aa).

The interval 1–428 is malic enzyme; sequence MDEQLKQSAL…KLTEFVYKTN (428 aa). Tyrosine 39 (proton donor) is an active-site residue. Lysine 94 functions as the Proton acceptor in the catalytic mechanism. A divalent metal cation contacts are provided by glutamate 136, aspartate 137, and aspartate 162. Residues 195–198, asparagine 288, and asparagine 320 each bind NADP(+); that span reads AGAA. The tract at residues 429 to 759 is phosphate acetyltransferase; the sequence is LFMKPIFSQA…AVVEAQTTPL (331 aa).

The protein in the N-terminal section; belongs to the malic enzymes family. In the C-terminal section; belongs to the phosphate acetyltransferase and butyryltransferase family. The cofactor is Mg(2+). It depends on Mn(2+) as a cofactor.

The catalysed reaction is (S)-malate + NADP(+) = pyruvate + CO2 + NADPH. It carries out the reaction oxaloacetate + H(+) = pyruvate + CO2. In Salmonella typhimurium (strain LT2 / SGSC1412 / ATCC 700720), this protein is NADP-dependent malic enzyme (maeB).